The primary structure comprises 221 residues: Thiopurine S-methyltransferase (221 aa).

4 residues coordinate S-adenosyl-L-methionine: tryptophan 12, leucine 47, glutamate 68, and arginine 125.

The protein belongs to the class I-like SAM-binding methyltransferase superfamily. TPMT family.

It is found in the cytoplasm. It catalyses the reaction S-adenosyl-L-methionine + a thiopurine = S-adenosyl-L-homocysteine + a thiopurine S-methylether.. The polypeptide is Thiopurine S-methyltransferase (Legionella pneumophila subsp. pneumophila (strain Philadelphia 1 / ATCC 33152 / DSM 7513)).